Reading from the N-terminus, the 283-residue chain is Nucleoid occlusion protein (283 aa).

The tract at residues 1–21 (MKHSFSRFFGFGEKEEEPEIA) is disordered. The H-T-H motif DNA-binding region spans 148–167 (EALAQRLGKGQSTIANKLRL).

The protein belongs to the ParB family.

Its subcellular location is the cytoplasm. It is found in the nucleoid. Effects nucleoid occlusion by binding relatively nonspecifically to DNA and preventing the assembly of the division machinery in the vicinity of the nucleoid, especially under conditions that disturb the cell cycle. It helps to coordinate cell division and chromosome segregation by preventing the formation of the Z ring through the nucleoid, which would cause chromosome breakage. The polypeptide is Nucleoid occlusion protein (Bacillus velezensis (strain DSM 23117 / BGSC 10A6 / LMG 26770 / FZB42) (Bacillus amyloliquefaciens subsp. plantarum)).